A 366-amino-acid polypeptide reads, in one-letter code: MKIADLMTLLDHHVPFSTAESWDNVGLLIGDEDVEVTGVLTALDCTLEVVNEAIEKGYNTIISHHPLIFKGVTSLKANGYGLIIRKLIQHDINLIAMHTNLDVNPYGVNMMLAKAMGLKNISIINNQQDVYYKVQTYIPKDNVGPFKDKLSENGLAQEGNYEYCFFESEGRGQFKPVGEANPTIGQIDKIEYVDEVKIEFMIDAYQKSRAEQLIKQYHPYETPVFDFIEIKQTSLYGLGVMAEVDNQMTLEDFAADIKSKLNIPSVRFVGESNQKIKRIAIIGGSGIGYEYQAVQQGADVFVTGDIKHHDALDAKIHGVNLIDINHYSEYVMKEGLKTLLMNRFNTEKINIDVEASTINTDPFQYI.

H64, H65, D102, H326, and E329 together coordinate Zn(2+).

Belongs to the GTP cyclohydrolase I type 2/NIF3 family. As to quaternary structure, homohexamer.

This chain is GTP cyclohydrolase 1 type 2 homolog, found in Staphylococcus aureus (strain MSSA476).